Here is a 448-residue protein sequence, read N- to C-terminus: MRKYFGTDGIRGKVGTTPITPEFMLKLGWAAGQVFKENDKKILIGKDTRISGYMFESALESGIVAAGADVRLVGPMPTPAIAYLTRTFRASAGIVISASHNPYTDNGIKFFSAEGGKISDELEERIEYFLEQPMEVVESSQIGRAKRIDDAAGRYIEYCKGTFPIGLQLSGLKIVVDCADGATYHVAPRVFSELGAEVISIGVNPDGLNINEFSGATKPELLRKNVLAEEADLGIALDGDGDRLILVDRHGVVRDGDDILYIIANHLMRTGRFSGGVVGTLMSNFGLELAFSETGIGFSRAAVGDRYVNEKLMQHGWVLGGEPSGHIVCRSITTTGDGIIAALQVLRAMVEEGKALDELLVGLVKFPQKLKNIRVAKRFVPNEEPTLQKAIAVANERLNGLGRVLLRASGTEPLIRVMVEGRDNDTVDELVEYLVEEVNSVVSAKADT.

The Phosphoserine intermediate role is filled by Ser99. Mg(2+) contacts are provided by Ser99, Asp238, Asp240, and Asp242. Ser99 is modified (phosphoserine).

This sequence belongs to the phosphohexose mutase family. It depends on Mg(2+) as a cofactor. Activated by phosphorylation.

It carries out the reaction alpha-D-glucosamine 1-phosphate = D-glucosamine 6-phosphate. Its function is as follows. Catalyzes the conversion of glucosamine-6-phosphate to glucosamine-1-phosphate. This chain is Phosphoglucosamine mutase, found in Marinomonas sp. (strain MWYL1).